We begin with the raw amino-acid sequence, 91 residues long: Small ribosomal subunit protein uS17 (91 aa).

It belongs to the universal ribosomal protein uS17 family. As to quaternary structure, part of the 30S ribosomal subunit.

In terms of biological role, one of the primary rRNA binding proteins, it binds specifically to the 5'-end of 16S ribosomal RNA. This chain is Small ribosomal subunit protein uS17, found in Acidithiobacillus ferrooxidans (strain ATCC 23270 / DSM 14882 / CIP 104768 / NCIMB 8455) (Ferrobacillus ferrooxidans (strain ATCC 23270)).